The following is a 30-amino-acid chain: Neurotoxin II.22.5 (30 aa).

In terms of domain architecture, LCN-type CS-alpha/beta spans 1–30 (KEGYIVNYHTGCKYTCAKLGDNDYCLRECK).

This sequence belongs to the long (4 C-C) scorpion toxin superfamily. Sodium channel inhibitor family. Beta subfamily. In terms of tissue distribution, expressed by the venom gland.

The protein resides in the secreted. In terms of biological role, binds to sodium channels (Nav) and inhibits the inactivation of the activated channels, thereby blocking neuronal transmission. The sequence is that of Neurotoxin II.22.5 from Centruroides tecomanus (Scorpion).